A 349-amino-acid polypeptide reads, in one-letter code: Ribonucleoside-diphosphate reductase small chain (349 aa).

Residues Asp-99, Glu-130, and His-133 each coordinate Fe cation. Residue Tyr-137 is part of the active site. Positions 192, 226, and 229 each coordinate Fe cation.

It belongs to the ribonucleoside diphosphate reductase small chain family. As to quaternary structure, heterodimer of a large and a small subunit. Requires Fe cation as cofactor.

It carries out the reaction a 2'-deoxyribonucleoside 5'-diphosphate + [thioredoxin]-disulfide + H2O = a ribonucleoside 5'-diphosphate + [thioredoxin]-dithiol. Its function is as follows. Provides the precursors necessary for DNA synthesis. Catalyzes the biosynthesis of deoxyribonucleotides from the corresponding ribonucleotides. The protein is Ribonucleoside-diphosphate reductase small chain (RNR2) of Plasmodium falciparum (isolate Dd2).